A 156-amino-acid polypeptide reads, in one-letter code: 6,7-dimethyl-8-ribityllumazine synthase (156 aa).

5-amino-6-(D-ribitylamino)uracil is bound by residues Phe-25, 59 to 61, and 83 to 85; these read AWE and AVI. 88-89 is a (2S)-2-hydroxy-3-oxobutyl phosphate binding site; that stretch reads ST. His-91 (proton donor) is an active-site residue. Residue Asn-116 participates in 5-amino-6-(D-ribitylamino)uracil binding. Arg-130 is a binding site for (2S)-2-hydroxy-3-oxobutyl phosphate.

This sequence belongs to the DMRL synthase family. Forms an icosahedral capsid composed of 60 subunits, arranged as a dodecamer of pentamers.

It catalyses the reaction (2S)-2-hydroxy-3-oxobutyl phosphate + 5-amino-6-(D-ribitylamino)uracil = 6,7-dimethyl-8-(1-D-ribityl)lumazine + phosphate + 2 H2O + H(+). It functions in the pathway cofactor biosynthesis; riboflavin biosynthesis; riboflavin from 2-hydroxy-3-oxobutyl phosphate and 5-amino-6-(D-ribitylamino)uracil: step 1/2. Its function is as follows. Catalyzes the formation of 6,7-dimethyl-8-ribityllumazine by condensation of 5-amino-6-(D-ribitylamino)uracil with 3,4-dihydroxy-2-butanone 4-phosphate. This is the penultimate step in the biosynthesis of riboflavin. The polypeptide is 6,7-dimethyl-8-ribityllumazine synthase (Acinetobacter baylyi (strain ATCC 33305 / BD413 / ADP1)).